Reading from the N-terminus, the 247-residue chain is Uridylate kinase (247 aa).

15-18 (KLSG) provides a ligand contact to ATP. Positions 23–28 (GDEGFG) are involved in allosteric activation by GTP. Residue Gly57 participates in UMP binding. 2 residues coordinate ATP: Gly58 and Arg62. UMP is bound by residues Asp77 and 138 to 145 (TGNPFFTT). ATP is bound by residues Thr165, Tyr171, and Asp174.

Belongs to the UMP kinase family. Homohexamer.

It is found in the cytoplasm. It catalyses the reaction UMP + ATP = UDP + ADP. It functions in the pathway pyrimidine metabolism; CTP biosynthesis via de novo pathway; UDP from UMP (UMPK route): step 1/1. Its activity is regulated as follows. Allosterically activated by GTP. Inhibited by UTP. In terms of biological role, catalyzes the reversible phosphorylation of UMP to UDP. In Saccharophagus degradans (strain 2-40 / ATCC 43961 / DSM 17024), this protein is Uridylate kinase.